A 166-amino-acid chain; its full sequence is NAD(P)H-quinone oxidoreductase subunit I, chloroplastic (166 aa).

4Fe-4S ferredoxin-type domains are found at residues 55–84 (GRIH…VDWK) and 95–124 (LNYS…MTEE). The [4Fe-4S] cluster site is built by C64, C67, C70, C74, C104, C107, C110, and C114.

This sequence belongs to the complex I 23 kDa subunit family. NDH is composed of at least 16 different subunits, 5 of which are encoded in the nucleus. [4Fe-4S] cluster serves as cofactor.

Its subcellular location is the plastid. It is found in the chloroplast thylakoid membrane. The catalysed reaction is a plastoquinone + NADH + (n+1) H(+)(in) = a plastoquinol + NAD(+) + n H(+)(out). It catalyses the reaction a plastoquinone + NADPH + (n+1) H(+)(in) = a plastoquinol + NADP(+) + n H(+)(out). In terms of biological role, NDH shuttles electrons from NAD(P)H:plastoquinone, via FMN and iron-sulfur (Fe-S) centers, to quinones in the photosynthetic chain and possibly in a chloroplast respiratory chain. The immediate electron acceptor for the enzyme in this species is believed to be plastoquinone. Couples the redox reaction to proton translocation, and thus conserves the redox energy in a proton gradient. This is NAD(P)H-quinone oxidoreductase subunit I, chloroplastic from Raillardella argentea (Silky raillardella).